A 530-amino-acid chain; its full sequence is Glucose-6-phosphate isomerase (530 aa).

The Proton donor role is filled by Glu347. Residues His378 and Lys493 contribute to the active site.

It belongs to the GPI family.

The protein resides in the cytoplasm. The catalysed reaction is alpha-D-glucose 6-phosphate = beta-D-fructose 6-phosphate. It participates in carbohydrate biosynthesis; gluconeogenesis. Its pathway is carbohydrate degradation; glycolysis; D-glyceraldehyde 3-phosphate and glycerone phosphate from D-glucose: step 2/4. Catalyzes the reversible isomerization of glucose-6-phosphate to fructose-6-phosphate. This is Glucose-6-phosphate isomerase from Chlamydia abortus (strain DSM 27085 / S26/3) (Chlamydophila abortus).